Here is a 348-residue protein sequence, read N- to C-terminus: Nitrogenase vanadium-iron protein beta chain (348 aa).

Positions 31, 56, 115, and 153 each coordinate [8Fe-7S] cluster.

The protein belongs to the NifD/NifK/NifE/NifN family. In terms of assembly, hexamer of two alpha, two beta, and two delta chains. [8Fe-7S] cluster is required as a cofactor.

It catalyses the reaction N2 + 8 reduced [2Fe-2S]-[ferredoxin] + 16 ATP + 16 H2O = H2 + 8 oxidized [2Fe-2S]-[ferredoxin] + 2 NH4(+) + 16 ADP + 16 phosphate + 6 H(+). Functionally, this vanadium-iron protein is part of the nitrogenase complex that catalyzes the key enzymatic reactions in nitrogen fixation. In Azotobacter salinestris, this protein is Nitrogenase vanadium-iron protein beta chain (vnfK).